A 194-amino-acid polypeptide reads, in one-letter code: Orotate phosphoribosyltransferase (194 aa).

E114–S122 contacts 5-phospho-alpha-D-ribose 1-diphosphate. Positions 118 and 146 each coordinate orotate.

It belongs to the purine/pyrimidine phosphoribosyltransferase family. PyrE subfamily. As to quaternary structure, homodimer. Requires Mg(2+) as cofactor.

It carries out the reaction orotidine 5'-phosphate + diphosphate = orotate + 5-phospho-alpha-D-ribose 1-diphosphate. The protein operates within pyrimidine metabolism; UMP biosynthesis via de novo pathway; UMP from orotate: step 1/2. Functionally, catalyzes the transfer of a ribosyl phosphate group from 5-phosphoribose 1-diphosphate to orotate, leading to the formation of orotidine monophosphate (OMP). This is Orotate phosphoribosyltransferase from Clostridioides difficile (strain 630) (Peptoclostridium difficile).